Reading from the N-terminus, the 176-residue chain is NAD(P)H-quinone oxidoreductase subunit 6, chloroplastic (176 aa).

The next 5 helical transmembrane spans lie at 10 to 30 (ILLV…VLLT), 32 to 52 (PIYS…FHIP), 61 to 81 (AQLL…VMFM), 107 to 127 (ILFS…IWTT), and 152 to 172 (FYLP…GAIA).

It belongs to the complex I subunit 6 family. In terms of assembly, NDH is composed of at least 16 different subunits, 5 of which are encoded in the nucleus.

It is found in the plastid. It localises to the chloroplast thylakoid membrane. It catalyses the reaction a plastoquinone + NADH + (n+1) H(+)(in) = a plastoquinol + NAD(+) + n H(+)(out). It carries out the reaction a plastoquinone + NADPH + (n+1) H(+)(in) = a plastoquinol + NADP(+) + n H(+)(out). In terms of biological role, NDH shuttles electrons from NAD(P)H:plastoquinone, via FMN and iron-sulfur (Fe-S) centers, to quinones in the photosynthetic chain and possibly in a chloroplast respiratory chain. The immediate electron acceptor for the enzyme in this species is believed to be plastoquinone. Couples the redox reaction to proton translocation, and thus conserves the redox energy in a proton gradient. The sequence is that of NAD(P)H-quinone oxidoreductase subunit 6, chloroplastic (ndhG) from Calycanthus floridus var. glaucus (Eastern sweetshrub).